A 241-amino-acid polypeptide reads, in one-letter code: Putative lipoprotein YvcA (241 aa).

Residues 1–18 (MKKIIFICFSLLLALTGG) form the signal peptide. The N-palmitoyl cysteine moiety is linked to residue C19. A lipid anchor (S-diacylglycerol cysteine) is attached at C19. The tract at residues 22 to 48 (NDNDKNSTNDNKTEAVKPKDMDPKDLP) is disordered. A compositionally biased stretch (basic and acidic residues) spans 23-46 (DNDKNSTNDNKTEAVKPKDMDPKD).

The protein resides in the cell membrane. In terms of biological role, required for complex colony architecture. The chain is Putative lipoprotein YvcA (yvcA) from Bacillus subtilis (strain 168).